The chain runs to 156 residues: 6,7-dimethyl-8-ribityllumazine synthase (156 aa).

Residues phenylalanine 22, 57 to 59, and 81 to 83 contribute to the 5-amino-6-(D-ribitylamino)uracil site; these read AYE and TVI. 86–87 serves as a coordination point for (2S)-2-hydroxy-3-oxobutyl phosphate; sequence GT. The active-site Proton donor is histidine 89. Residue phenylalanine 114 coordinates 5-amino-6-(D-ribitylamino)uracil. Arginine 128 lines the (2S)-2-hydroxy-3-oxobutyl phosphate pocket.

It belongs to the DMRL synthase family. As to quaternary structure, forms an icosahedral capsid composed of 60 subunits, arranged as a dodecamer of pentamers.

It carries out the reaction (2S)-2-hydroxy-3-oxobutyl phosphate + 5-amino-6-(D-ribitylamino)uracil = 6,7-dimethyl-8-(1-D-ribityl)lumazine + phosphate + 2 H2O + H(+). It functions in the pathway cofactor biosynthesis; riboflavin biosynthesis; riboflavin from 2-hydroxy-3-oxobutyl phosphate and 5-amino-6-(D-ribitylamino)uracil: step 1/2. In terms of biological role, catalyzes the formation of 6,7-dimethyl-8-ribityllumazine by condensation of 5-amino-6-(D-ribitylamino)uracil with 3,4-dihydroxy-2-butanone 4-phosphate. This is the penultimate step in the biosynthesis of riboflavin. The sequence is that of 6,7-dimethyl-8-ribityllumazine synthase from Salmonella heidelberg (strain SL476).